A 243-amino-acid chain; its full sequence is Ubiquinone/menaquinone biosynthesis C-methyltransferase UbiE (243 aa).

S-adenosyl-L-methionine-binding positions include Thr69, Asp90, and 116–117 (DA).

Belongs to the class I-like SAM-binding methyltransferase superfamily. MenG/UbiE family.

The catalysed reaction is a 2-demethylmenaquinol + S-adenosyl-L-methionine = a menaquinol + S-adenosyl-L-homocysteine + H(+). The enzyme catalyses a 2-methoxy-6-(all-trans-polyprenyl)benzene-1,4-diol + S-adenosyl-L-methionine = a 5-methoxy-2-methyl-3-(all-trans-polyprenyl)benzene-1,4-diol + S-adenosyl-L-homocysteine + H(+). It functions in the pathway quinol/quinone metabolism; menaquinone biosynthesis; menaquinol from 1,4-dihydroxy-2-naphthoate: step 2/2. It participates in cofactor biosynthesis; ubiquinone biosynthesis. In terms of biological role, methyltransferase required for the conversion of demethylmenaquinol (DMKH2) to menaquinol (MKH2) and the conversion of 2-polyprenyl-6-methoxy-1,4-benzoquinol (DDMQH2) to 2-polyprenyl-3-methyl-6-methoxy-1,4-benzoquinol (DMQH2). This is Ubiquinone/menaquinone biosynthesis C-methyltransferase UbiE from Burkholderia ambifaria (strain MC40-6).